The chain runs to 182 residues: Lipoprotein signal peptidase (182 aa).

3 consecutive transmembrane segments (helical) span residues 21–41, 74–94, and 98–118; these read LLLS…VLAV, GYTW…FWMG, and VSPW…GNLV. Active-site residues include Asp134 and Asp148. A helical membrane pass occupies residues 146-166; that stretch reads VADPSVVGGAILLVVLSIFGY.

The protein belongs to the peptidase A8 family.

Its subcellular location is the cell membrane. It catalyses the reaction Release of signal peptides from bacterial membrane prolipoproteins. Hydrolyzes -Xaa-Yaa-Zaa-|-(S,diacylglyceryl)Cys-, in which Xaa is hydrophobic (preferably Leu), and Yaa (Ala or Ser) and Zaa (Gly or Ala) have small, neutral side chains.. The protein operates within protein modification; lipoprotein biosynthesis (signal peptide cleavage). In terms of biological role, this protein specifically catalyzes the removal of signal peptides from prolipoproteins. The chain is Lipoprotein signal peptidase from Mycobacterium avium (strain 104).